The sequence spans 440 residues: L-seryl-tRNA(Sec) selenium transferase (440 aa).

Position 282 is an N6-(pyridoxal phosphate)lysine (Lys282).

The protein belongs to the SelA family. Pyridoxal 5'-phosphate serves as cofactor.

Its subcellular location is the cytoplasm. The enzyme catalyses L-seryl-tRNA(Sec) + selenophosphate + H(+) = L-selenocysteinyl-tRNA(Sec) + phosphate. The protein operates within aminoacyl-tRNA biosynthesis; selenocysteinyl-tRNA(Sec) biosynthesis; selenocysteinyl-tRNA(Sec) from L-seryl-tRNA(Sec) (bacterial route): step 1/1. In terms of biological role, converts seryl-tRNA(Sec) to selenocysteinyl-tRNA(Sec) required for selenoprotein biosynthesis. This Campylobacter jejuni subsp. jejuni serotype O:2 (strain ATCC 700819 / NCTC 11168) protein is L-seryl-tRNA(Sec) selenium transferase.